The chain runs to 354 residues: MLDKLDRLEEEYRELEALLSDPEVLKDKGRYQSLSRRYAEMGEVIGLIREYRKVLEDLEQAESLLDDPELKEMAKAEREALLARKEALEKELERHLLPKDPMDERDAIVEIRAGTGGEEAALFARDLFNMYLRFAEEMGFETEVLDSHPTDLGGFSKVVFEVRGPGAYGTFKYESGVHRVQRVPVTETQGRIHTSTATVAVLPKAEEEDFALNMDEIRIDVMRASGPGGQGVNTTDSAVRVVHLPTGIMVTCQDSRSQIKNREKALMILRSRLLEMKRAEEAERLRKTRLAQIGTGERSEKIRTYNFPQSRVTDHRIGFTTHDLEGVLSGHLTPILEALKRADQERQLAALAEG.

Gln230 carries the N5-methylglutamine modification.

Belongs to the prokaryotic/mitochondrial release factor family. Methylated by PrmC. Methylation increases the termination efficiency of RF1.

It localises to the cytoplasm. In terms of biological role, peptide chain release factor 1 directs the termination of translation in response to the peptide chain termination codons UAG and UAA. The protein is Peptide chain release factor 1 of Thermus thermophilus (strain ATCC BAA-163 / DSM 7039 / HB27).